Consider the following 228-residue polypeptide: 6-carboxyhexanoate--CoA ligase (228 aa).

It belongs to the BioW family. In terms of assembly, homodimer. Requires Mg(2+) as cofactor.

It catalyses the reaction heptanedioate + ATP + CoA = 6-carboxyhexanoyl-CoA + AMP + diphosphate. It participates in metabolic intermediate metabolism; pimeloyl-CoA biosynthesis; pimeloyl-CoA from pimelate: step 1/1. Catalyzes the transformation of pimelate into pimeloyl-CoA with concomitant hydrolysis of ATP to AMP. The chain is 6-carboxyhexanoate--CoA ligase from Staphylococcus epidermidis (strain ATCC 35984 / DSM 28319 / BCRC 17069 / CCUG 31568 / BM 3577 / RP62A).